A 494-amino-acid polypeptide reads, in one-letter code: uncharacterized protein (494 aa).

VOC domains lie at 18–174 and 229–408; these read FIDC…FINR and SLDH…FGIL. Fe cation-binding residues include His232, His349, and Glu460.

It belongs to the 4HPPD family. It depends on Fe cation as a cofactor.

In terms of biological role, may have dioxygenase activity. This is an uncharacterized protein from Dictyostelium discoideum (Social amoeba).